Here is a 176-residue protein sequence, read N- to C-terminus: Oxaleimides biosynthesis cluster protein N (176 aa).

Transmembrane regions (helical) follow at residues 5-25, 71-91, 104-124, and 155-175; these read LLVV…PLIT, VWTG…LNLF, FLYG…PKML, and FWIV…EGLK.

Its subcellular location is the membrane. It participates in secondary metabolite biosynthesis. Part of the gene cluster that mediates the biosynthesis of oxaleimides, cytotoxic compounds containing an unusual disubstituted succinimide moiety. The first step of the pathway is provided by the HR-PKS poxF that serves in a new mode of collaborative biosynthesis with the PKS-NRPS poxE, by providing the olefin containing amino acid substrate via the synthesis of an ACP-bound dec-4-enoate. The cytochrome P450 monooxygenase poxM-catalyzed oxidation at the alpha-position creates the enzyme-bound 2-hydroxydec-4-enoyl-ACP thioester, which may be prone to spontaneous hydrolysis to yield 2-hydroxydec-4-enoic acid due to increased electrophilicity of the carbonyl. 2-hydroxydec-4-enoic acid can then be further oxidized by poxM to yield the alpha-ketoacid 2-oxodec-4-enoicacid, which is reductively aminated by the aminotransferase poxL to yield (S,E)-2-aminodec-4-enoic acid. The Hybrid PKS-NRPS synthetase poxE then performs condensation between the octaketide product of its PKS modules and the amino group of (S,E)-2-aminodec-4-enoic acid which is activated and incorporated by the adenylation domain. The resulting aminoacyl product can be cyclized by the Diels-Alderase PoxQ and reductively released by the reductive (R) domain of poxE to yield an aldehyde intermediate. The released aldehyde is then substrate for a Knoevenagel condensation by the hydrolyase poxO followed by an oxidation at the 5-position of the pyrrolidone ring. The presence of the olefin from the amino acid building block allows for migration of the substituted allyl group to occur. This allylic transposition reaction takes place in a conjugate addition, semipinacol-like fashion to yield a succinimide intermediate. Iterative two-electron oxidations of the C7 methyl of the succinimide intermediate to the carboxylic acid can be catalyzed by one of two remaining cytochrome P450 monooxygenasess poxC or poxD to yield oxaleimide A. Subsequent oxidation yields the maleimide scaffold oxaleimide I. Both oxaleimide A and oxaleimide I can undergo oxidative modifications in the decalin ring to yield the series of products oxaleimides B to H. The sequence is that of Oxaleimides biosynthesis cluster protein N from Penicillium oxalicum (strain 114-2 / CGMCC 5302) (Penicillium decumbens).